A 313-amino-acid chain; its full sequence is Protein FixB (313 aa).

255 to 283 (LYLAVGISGQIQHMVGANASQTIFAINKD) contributes to the FAD binding site.

It belongs to the ETF alpha-subunit/FixB family. In terms of assembly, heterodimer of FixA and FixB.

The protein operates within amine and polyamine metabolism; carnitine metabolism. In terms of biological role, required for anaerobic carnitine reduction. May bring reductant to CaiA. This is Protein FixB from Escherichia coli (strain SMS-3-5 / SECEC).